A 122-amino-acid polypeptide reads, in one-letter code: S-adenosylmethionine decarboxylase proenzyme (122 aa).

Serine 63 (schiff-base intermediate with substrate; via pyruvic acid) is an active-site residue. Serine 63 is subject to Pyruvic acid (Ser); by autocatalysis. The active-site Proton acceptor; for processing activity is the histidine 68. Cysteine 83 (proton donor; for catalytic activity) is an active-site residue.

The protein belongs to the prokaryotic AdoMetDC family. Type 1 subfamily. In terms of assembly, heterotetramer of two alpha and two beta chains arranged as a dimer of alpha/beta heterodimers. It depends on pyruvate as a cofactor. Is synthesized initially as an inactive proenzyme. Formation of the active enzyme involves a self-maturation process in which the active site pyruvoyl group is generated from an internal serine residue via an autocatalytic post-translational modification. Two non-identical subunits are generated from the proenzyme in this reaction, and the pyruvate is formed at the N-terminus of the alpha chain, which is derived from the carboxyl end of the proenzyme. The post-translation cleavage follows an unusual pathway, termed non-hydrolytic serinolysis, in which the side chain hydroxyl group of the serine supplies its oxygen atom to form the C-terminus of the beta chain, while the remainder of the serine residue undergoes an oxidative deamination to produce ammonia and the pyruvoyl group blocking the N-terminus of the alpha chain.

It catalyses the reaction S-adenosyl-L-methionine + H(+) = S-adenosyl 3-(methylsulfanyl)propylamine + CO2. It participates in amine and polyamine biosynthesis; S-adenosylmethioninamine biosynthesis; S-adenosylmethioninamine from S-adenosyl-L-methionine: step 1/1. Its function is as follows. Catalyzes the decarboxylation of S-adenosylmethionine to S-adenosylmethioninamine (dcAdoMet), the propylamine donor required for the synthesis of the polyamines spermine and spermidine from the diamine putrescine. In Methanococcus maripaludis (strain C7 / ATCC BAA-1331), this protein is S-adenosylmethionine decarboxylase proenzyme.